The chain runs to 267 residues: Tryptophan synthase alpha chain (267 aa).

Residues E47 and D58 each act as proton acceptor in the active site.

The protein belongs to the TrpA family. As to quaternary structure, tetramer of two alpha and two beta chains.

The catalysed reaction is (1S,2R)-1-C-(indol-3-yl)glycerol 3-phosphate + L-serine = D-glyceraldehyde 3-phosphate + L-tryptophan + H2O. It functions in the pathway amino-acid biosynthesis; L-tryptophan biosynthesis; L-tryptophan from chorismate: step 5/5. In terms of biological role, the alpha subunit is responsible for the aldol cleavage of indoleglycerol phosphate to indole and glyceraldehyde 3-phosphate. The protein is Tryptophan synthase alpha chain of Chlorobaculum tepidum (strain ATCC 49652 / DSM 12025 / NBRC 103806 / TLS) (Chlorobium tepidum).